The chain runs to 1014 residues: MICAL-like protein 2 (1014 aa).

One can recognise a Calponin-homology (CH) domain in the interval 1–107; sequence MAAIKALQEW…YVSQYYNYFH (107 aa). Positions 1–261 are forms an intramolecular interaction with the C-terminal coiled coil domain keeping the protein in a closed conformation; the sequence is MAAIKALQEW…KLSNLASRQP (261 aa). Phosphoserine is present on residues serine 110, serine 144, and serine 154. The interval 114–181 is disordered; it reads GMAGMKRPSS…PSPKAAPGTV (68 aa). An LIM zinc-binding domain is found at 187-249; the sequence is SICGVCGKHV…THHSSEAVSV (63 aa). A Phosphoserine modification is found at serine 250. Residues 262–394 form a necessary and sufficient for interaction with actinins region; sequence GGGIADTRPI…QGQAASKGVK (133 aa). Residues 262-810 form a mediates targeting to the cell plasma membrane region; it reads GGGIADTRPI…QDDQTRSCKE (549 aa). Disordered regions lie at residues 311–450 and 609–780; these read LTPP…SRVP and TLPK…RRKK. Polar residues predominate over residues 332 to 355; sequence STVTTTSANSKATTHVTNSSPVGW. Positions 356-368 are enriched in low complexity; sequence SSSAQSSTGTSGS. Residues 384-398 show a composition bias toward polar residues; that stretch reads PQGQAASKGVKTQLN. Low complexity-rich tracts occupy residues 399–419 and 438–447; these read SSTD…SSRT and PASSSSSHAS. Composition is skewed to polar residues over residues 624-633 and 646-656; these read LSHSTTQAFS and VGSTSWTSVSL. 2 stretches are compositionally biased toward basic and acidic residues: residues 701-711 and 720-737; these read EGWRARLKPVD and LEQK…DTPR. Residues 747–758 show a composition bias toward polar residues; that stretch reads IHITLTPIQQKR. At threonine 759 the chain carries Phosphothreonine. 2 positions are modified to phosphoserine: serine 773 and serine 837. Positions 811 to 918 are forms an intramolecular interaction with the N-terminal Calponin-homology and LIM zinc-binding domains-containing region keeping the protein in a closed conformation; sequence KTATWGTRES…LMYKSKDQCL (108 aa). The bMERB domain maps to 838 to 985; that stretch reads PVRLHPNYIS…EQEEDQMLES (148 aa). Residues 845–885 are a coiled coil; that stretch reads YISQEELQRQLQDIERQLDALELRGVELEKRLRAAEGDASE. The segment at 918-1014 is mediates interaction with RAB13 and is required for transition from the closed to the open conformation; the sequence is LEERQLDLQG…WSSKSKSGQT (97 aa).

In terms of assembly, interacts with RAB13 (GTP-bound form); competes with RAB8A and is involved in tight junctions assembly. Interacts with RAB8A; competes with RAB13 and is involved in E-cadherin endocytic recycling. Interacts with RAB8B. Interacts (preferentially in opened conformation) with ACTN1 and ACTN4; stimulated by RAB13 activation. Interacts (via calponin-homology (CH) domain) with the filamins FLNA, FLNB and FLNC (via actin-binding domain).

The protein localises to the cell membrane. It is found in the cell junction. It localises to the tight junction. Its subcellular location is the recycling endosome. The protein resides in the cell projection. The protein localises to the neuron projection. It is found in the cytoplasm. It localises to the cytoskeleton. Functionally, effector of small Rab GTPases which is involved in junctional complexes assembly through the regulation of cell adhesion molecules transport to the plasma membrane and actin cytoskeleton reorganization. Regulates the endocytic recycling of occludins, claudins and E-cadherin to the plasma membrane and may thereby regulate the establishment of tight junctions and adherens junctions. In parallel, may regulate actin cytoskeleton reorganization directly through interaction with F-actin or indirectly through actinins and filamins. Most probably involved in the processes of epithelial cell differentiation, cell spreading and neurite outgrowth. Undergoes liquid-liquid phase separation to form tubular recycling endosomes. Plays 2 sequential roles in the biogenesis of tubular recycling endosomes: first organizes phase separation and then the closed form formed by interaction with RAB8A promotes endosomal tubulation. The polypeptide is MICAL-like protein 2 (Micall2) (Rattus norvegicus (Rat)).